The chain runs to 339 residues: Cilia- and flagella-associated protein 36 (339 aa).

Coiled-coil stretches lie at residues 142 to 188 (ISDL…ENKQ) and 255 to 330 (NLSQ…EVIL). 2 disordered regions span residues 177-212 (NLTLGEHSENKQSSGSERTPNNTELPVKTQKEEKQP) and 281-318 (KKQESKKMAQNSEEHEEKATCSKQEMTEEEKKSLQRRK). Residues 187-200 (KQSSGSERTPNNTE) show a composition bias toward polar residues. A compositionally biased stretch (basic and acidic residues) spans 281 to 313 (KKQESKKMAQNSEEHEEKATCSKQEMTEEEKKS).

The protein belongs to the CFAP36 family.

It is found in the nucleus. The protein resides in the cytoplasm. It localises to the cell projection. Its subcellular location is the cilium. The protein localises to the flagellum. In Xenopus tropicalis (Western clawed frog), this protein is Cilia- and flagella-associated protein 36.